Consider the following 754-residue polypeptide: Gelsolin, cytoplasmic (754 aa).

The tract at residues 1–120 is actin-severing; the sequence is MVPAFEGAGA…RYLKGGVASG (120 aa). The stretch at 22-71 is one Gelsolin-like 1 repeat; sequence FEVVPYPKEKYGQFYQGDSYIVLYTRDVNGNLSWDLHFWLGSETSQDEAG. Positions 68-71 are actin-actin interfilament contact point; that stretch reads DEAG. Residues 101–108 and 133–141 contribute to the a 1,2-diacyl-sn-glycero-3-phospho-(1D-myo-inositol-4,5-bisphosphate) site; these read LFLSRFKK and RLFHVKGRR. Residues 143 to 183 form a Gelsolin-like 2 repeat; that stretch reads IRIRQVEVGVGSMNKGDCFILDCGSQVYAYMGPSSRKMDRL. Positions 209-238 are disordered; the sequence is TASGSEAGESSPGLGGGSPDDVADEDTGVD. The segment covering 210–220 has biased composition (low complexity); it reads ASGSEAGESSP. Gelsolin-like repeat units lie at residues 266 to 306, 414 to 463, 538 to 580, and 643 to 684; these read NMIG…KEKV, LKLE…DEKA, FDTR…EEKA, and LRVN…QEKE. The segment at 386–751 is actin-binding, Ca-sensitive; the sequence is LLQKNAGPAF…MKAQVPETNA (366 aa). Residues glycine 430, aspartate 431, glutamate 461, aspartate 556, glutamate 578, aspartate 659, aspartate 660, and glutamate 682 each coordinate Ca(2+).

The protein belongs to the villin/gelsolin family. In terms of tissue distribution, tail muscle.

The protein resides in the cytoplasm. The protein localises to the cytoskeleton. Its function is as follows. Calcium-regulated, actin-modulating protein that binds to the plus (or barbed) ends of actin monomers or filaments, preventing monomer exchange (end-blocking or capping). It can promote the assembly of monomers into filaments (nucleation) as well as sever filaments already formed. The protein is Gelsolin, cytoplasmic of Homarus americanus (American lobster).